A 121-amino-acid chain; its full sequence is Large ribosomal subunit protein uL14 (121 aa).

This sequence belongs to the universal ribosomal protein uL14 family. As to quaternary structure, part of the 50S ribosomal subunit. Forms a cluster with proteins L3 and L19. In the 70S ribosome, L14 and L19 interact and together make contacts with the 16S rRNA in bridges B5 and B8.

Functionally, binds to 23S rRNA. Forms part of two intersubunit bridges in the 70S ribosome. In Synechococcus sp. (strain RCC307), this protein is Large ribosomal subunit protein uL14.